Consider the following 277-residue polypeptide: Indole-3-glycerol phosphate synthase (277 aa).

This sequence belongs to the TrpC family.

The enzyme catalyses 1-(2-carboxyphenylamino)-1-deoxy-D-ribulose 5-phosphate + H(+) = (1S,2R)-1-C-(indol-3-yl)glycerol 3-phosphate + CO2 + H2O. It functions in the pathway amino-acid biosynthesis; L-tryptophan biosynthesis; L-tryptophan from chorismate: step 4/5. The protein is Indole-3-glycerol phosphate synthase of Pseudomonas putida (strain ATCC 700007 / DSM 6899 / JCM 31910 / BCRC 17059 / LMG 24140 / F1).